The following is a 563-amino-acid chain: Cytochrome b (563 aa).

A run of 12 helical transmembrane segments spans residues 36–61, 81–104, 119–141, 193–220, 255–276, 326–345, 358–379, 387–409, 436–454, 458–476, 505–527, and 539–557; these read SYWL…LLYY, SVLL…HMFR, WVTG…SLVS, RLLG…ERYG, LSIV…ANIN, ILTI…LPFL, FWTW…WGYL, TSAQ…YLWP, ILLG…FNFI, TLIN…IYAL, IAFF…MWTL, and MDLG…LYHY. Heme is bound by residues His-87 and His-101. Residues His-198 and His-212 each coordinate heme.

Belongs to the cytochrome b family. In terms of assembly, it is a component of at least 2 distinct terminal oxidases, the quinol oxidase (SoxABC) and the alternate quinol oxidase with the core components SoxM and a Rieske Fe-S protein.

It is found in the cell membrane. Binds 2 heme groups (b586 and b606) which are not covalently bound to the protein. This chain is Cytochrome b (soxC), found in Sulfolobus acidocaldarius (strain ATCC 33909 / DSM 639 / JCM 8929 / NBRC 15157 / NCIMB 11770).